The primary structure comprises 354 residues: Protein RecA (354 aa).

65-72 (GPESSGKT) lines the ATP pocket.

Belongs to the RecA family.

It localises to the cytoplasm. In terms of biological role, can catalyze the hydrolysis of ATP in the presence of single-stranded DNA, the ATP-dependent uptake of single-stranded DNA by duplex DNA, and the ATP-dependent hybridization of homologous single-stranded DNAs. It interacts with LexA causing its activation and leading to its autocatalytic cleavage. This Aeromonas hydrophila subsp. hydrophila (strain ATCC 7966 / DSM 30187 / BCRC 13018 / CCUG 14551 / JCM 1027 / KCTC 2358 / NCIMB 9240 / NCTC 8049) protein is Protein RecA.